The chain runs to 495 residues: Iroquois-class homeodomain protein irx-4-B (495 aa).

Positions 141-203 form a DNA-binding region, homeobox; TALE-type; the sequence is GSTRRKNATR…NARRRLKKEN (63 aa). The segment at 203–245 is disordered; that stretch reads NKMTWPPRNKCSDEKRPYDEEEEEEEDSQKATIKNEKKTVDEE. The span at 235-245 shows a compositional bias: basic and acidic residues; that stretch reads IKNEKKTVDEE.

Belongs to the TALE/IRO homeobox family.

It is found in the nucleus. In terms of biological role, acts partially redundantly with other irx members in neural patterning. Required for formation of the posterior forebrain, midbrain, hindbrain, and to a lesser extent, spinal cord. Patterns the neuroectoderm in both the anterior/posterior and dorsal/ventral axes. Does not appear to play a role in pronephros kidney development. In Xenopus laevis (African clawed frog), this protein is Iroquois-class homeodomain protein irx-4-B (irx4-b).